A 44-amino-acid chain; its full sequence is Thymosin beta-4, Y-chromosomal (44 aa).

Residues 1–44 (MSDKPGMAEIEKFDKSKLKKTETQEKNPLSSKETIEQERQAGES) are disordered. Basic and acidic residues-rich tracts occupy residues 9–25 (EIEKFDKSKLKKTETQE) and 33–44 (ETIEQERQAGES).

This sequence belongs to the thymosin beta family. As to expression, ubiquitous.

It localises to the cytoplasm. It is found in the cytoskeleton. In terms of biological role, plays an important role in the organization of the cytoskeleton. Binds to and sequesters actin monomers (G actin) and therefore inhibits actin polymerization. This is Thymosin beta-4, Y-chromosomal (TMSB4Y) from Homo sapiens (Human).